Here is a 165-residue protein sequence, read N- to C-terminus: Choriogonadotropin subunit beta 3 (165 aa).

Positions 1–20 are cleaved as a signal peptide; sequence MEMFQGLLLLLLLSMGGTWA. Intrachain disulfides connect C29–C77, C43–C92, C46–C130, C54–C108, C58–C110, and C113–C120. 2 N-linked (GlcNAc...) asparagine glycosylation sites follow: N33 and N50. The interval 131–165 is disordered; it reads DDPRFQDSSSSKAPPPSLPSPSRLPGPSDTPILPQ. Residues S141, S147, S152, and S158 are each glycosylated (O-linked (GalNAc...) serine). Residues 143–154 show a composition bias toward pro residues; sequence APPPSLPSPSRL.

It belongs to the glycoprotein hormones subunit beta family. Heterodimer of a common alpha chain identical in LH, FSH, TSH and HCG and a unique beta chain distinct in each of the hormones. High expression in the placenta throughout pregnancy.

It is found in the secreted. Its function is as follows. Beta subunit of the human chorionic gonadotropin (hCG). hCG is a complex glycoprotein composed of two glycosylated subunits alpha and beta which are non-covalently associated. The alpha subunit is identical to those in the pituitary gonadotropin hormones (LH, FSH and TSH). The beta subunits are distinct in each of the hormones and confer receptor and biological specificity. Has an essential role in pregnancy and maternal adaptation. Stimulates the ovaries to synthesize the steroids that are essential for the maintenance of pregnancy. This is Choriogonadotropin subunit beta 3 (CGB3) from Homo sapiens (Human).